We begin with the raw amino-acid sequence, 510 residues long: Proline--tRNA ligase 2 (510 aa).

Belongs to the class-II aminoacyl-tRNA synthetase family. ProS type 3 subfamily. As to quaternary structure, homodimer.

The protein localises to the cytoplasm. It catalyses the reaction tRNA(Pro) + L-proline + ATP = L-prolyl-tRNA(Pro) + AMP + diphosphate. Catalyzes the attachment of proline to tRNA(Pro) in a two-step reaction: proline is first activated by ATP to form Pro-AMP and then transferred to the acceptor end of tRNA(Pro). This chain is Proline--tRNA ligase 2, found in Anaeromyxobacter dehalogenans (strain 2CP-C).